The sequence spans 957 residues: Glycine dehydrogenase (decarboxylating) 2 (957 aa).

Lysine 707 carries the N6-(pyridoxal phosphate)lysine modification.

Belongs to the GcvP family. In terms of assembly, the glycine cleavage system is composed of four proteins: P, T, L and H. Pyridoxal 5'-phosphate is required as a cofactor.

The enzyme catalyses N(6)-[(R)-lipoyl]-L-lysyl-[glycine-cleavage complex H protein] + glycine + H(+) = N(6)-[(R)-S(8)-aminomethyldihydrolipoyl]-L-lysyl-[glycine-cleavage complex H protein] + CO2. In terms of biological role, the glycine cleavage system catalyzes the degradation of glycine. The P protein binds the alpha-amino group of glycine through its pyridoxal phosphate cofactor; CO(2) is released and the remaining methylamine moiety is then transferred to the lipoamide cofactor of the H protein. The polypeptide is Glycine dehydrogenase (decarboxylating) 2 (Pseudomonas fluorescens (strain ATCC BAA-477 / NRRL B-23932 / Pf-5)).